Here is a 388-residue protein sequence, read N- to C-terminus: MPNNSKHKKKQQRRQQEAQKKSRAKQIETDKKNDEFLDTELDEVSPLVIDDDMTEFKNMPKVELHAHLSGSLSPETIKLIMESDETRAEEIMKKYKLEKPENMTGVFDCFPVIHAILRKPEAIRIAIRQTIKEFEEDNCVYLELRTSPKETDFMTYEDYLQVCIESFEAAKHEFPRIKTFLIVSLDRRMPFETAAHILGLIGEAQQRTNVIVGVELSGDPHLDGRRLLKLFVAARRFHGLGITIHLAEVLQNMADVEDYLNLRPDRIGHGTFLHTDPYTEYLTNKYKIPLEICLSSNVYSKTTTNYRNSHFNYWRKRGVPVFICTDDKGVIPGATLTEEYYKAAITFDLSTEELIGINQDALLNSFAYKYNVTDLTETFRKINNNVLD.

The segment covering 1 to 13 has biased composition (basic residues); the sequence is MPNNSKHKKKQQR. The tract at residues 1–34 is disordered; sequence MPNNSKHKKKQQRRQQEAQKKSRAKQIETDKKND. Residues 14-34 show a composition bias toward basic and acidic residues; that stretch reads RQQEAQKKSRAKQIETDKKND. Residues His65 and His67 each coordinate Zn(2+). Residues His67, His114, 146–149, Asp186, and Gly218 contribute to the N(6)-methyl-AMP site; that span reads TSPK. His245 contacts Zn(2+). N(6)-methyl-AMP contacts are provided by Glu248, Asp326, and Asp327. Glu248 serves as the catalytic Proton donor. Asp326 contacts Zn(2+).

Belongs to the metallo-dependent hydrolases superfamily. Adenosine and AMP deaminases family. As to quaternary structure, monomer. Zn(2+) is required as a cofactor.

The catalysed reaction is N(6)-methyl-AMP + H2O + H(+) = IMP + methylamine. Functionally, catalyzes the hydrolysis of the free cytosolic methylated adenosine nucleotide N(6)-methyl-AMP (N6-mAMP) to produce inositol monophosphate (IMP) and methylamine. Is required for the catabolism of cytosolic N6-mAMP, which is derived from the degradation of mRNA containing N6-methylated adenine (m6A). This is Adenosine deaminase-like protein from Caenorhabditis elegans.